A 180-amino-acid polypeptide reads, in one-letter code: ATP-dependent protease subunit HslV (180 aa).

Thr5 is an active-site residue. Residues Gly161, Cys164, and Thr167 each contribute to the Na(+) site.

This sequence belongs to the peptidase T1B family. HslV subfamily. A double ring-shaped homohexamer of HslV is capped on each side by a ring-shaped HslU homohexamer. The assembly of the HslU/HslV complex is dependent on binding of ATP.

The protein localises to the cytoplasm. It catalyses the reaction ATP-dependent cleavage of peptide bonds with broad specificity.. With respect to regulation, allosterically activated by HslU binding. In terms of biological role, protease subunit of a proteasome-like degradation complex believed to be a general protein degrading machinery. The protein is ATP-dependent protease subunit HslV of Campylobacter fetus subsp. fetus (strain 82-40).